A 329-amino-acid polypeptide reads, in one-letter code: Ketol-acid reductoisomerase (NADP(+)) (329 aa).

Positions 1–181 (MKVYYENDAD…GATRSGVLQT (181 aa)) constitute a KARI N-terminal Rossmann domain. NADP(+) is bound by residues 24–27 (YGSQ), R47, and 82–85 (DQVQ). H107 is a catalytic residue. G133 contacts NADP(+). Residues 182 to 327 (TFREETETDL…GELRKMMSWL (146 aa)) form the KARI C-terminal knotted domain. Mg(2+) is bound by residues D190, E194, E226, and E230. Substrate is bound at residue S251.

The protein belongs to the ketol-acid reductoisomerase family. The cofactor is Mg(2+).

The catalysed reaction is (2R)-2,3-dihydroxy-3-methylbutanoate + NADP(+) = (2S)-2-acetolactate + NADPH + H(+). The enzyme catalyses (2R,3R)-2,3-dihydroxy-3-methylpentanoate + NADP(+) = (S)-2-ethyl-2-hydroxy-3-oxobutanoate + NADPH + H(+). It functions in the pathway amino-acid biosynthesis; L-isoleucine biosynthesis; L-isoleucine from 2-oxobutanoate: step 2/4. It participates in amino-acid biosynthesis; L-valine biosynthesis; L-valine from pyruvate: step 2/4. In terms of biological role, involved in the biosynthesis of branched-chain amino acids (BCAA). Catalyzes an alkyl-migration followed by a ketol-acid reduction of (S)-2-acetolactate (S2AL) to yield (R)-2,3-dihydroxy-isovalerate. In the isomerase reaction, S2AL is rearranged via a Mg-dependent methyl migration to produce 3-hydroxy-3-methyl-2-ketobutyrate (HMKB). In the reductase reaction, this 2-ketoacid undergoes a metal-dependent reduction by NADPH to yield (R)-2,3-dihydroxy-isovalerate. This chain is Ketol-acid reductoisomerase (NADP(+)), found in Maridesulfovibrio salexigens (strain ATCC 14822 / DSM 2638 / NCIMB 8403 / VKM B-1763) (Desulfovibrio salexigens).